The sequence spans 635 residues: Probable serine/threonine-protein kinase DDB_G0270146 (635 aa).

The region spanning 77 to 329 (VISDIAIGKG…AKELLSHPWI (253 aa)) is the Protein kinase domain. ATP contacts are provided by residues 83–91 (IGKGAFATV) and K106. The active-site Proton acceptor is the D199. Positions 360-392 (SLLSNSSGGDDSVTDSDLSISNQSSRSSSFLLD) are enriched in low complexity. A disordered region spans residues 360–405 (SLLSNSSGGDDSVTDSDLSISNQSSRSSSFLLDDGGGGGGSKNHTV). Coiled-coil stretches lie at residues 417–456 (IEFNKMQMELQLLRLRVGELETDLKKEQDLKKDSDRKYRE) and 536–585 (KKAL…KDSS). The span at 540–582 (EAQKRREKEQEKLKEQEKLKEKKKEKDIKKEKDKKDKKDKQLK) shows a compositional bias: basic and acidic residues. Positions 540-635 (EAQKRREKEQ…GRSSSKIFNE (96 aa)) are disordered. Residues 583-598 (DSSSSTTTTNSTPSTP) show a composition bias toward low complexity. Residues 626-635 (GRSSSKIFNE) are compositionally biased toward polar residues.

This sequence belongs to the protein kinase superfamily. STE Ser/Thr protein kinase family. Mg(2+) serves as cofactor.

The catalysed reaction is L-seryl-[protein] + ATP = O-phospho-L-seryl-[protein] + ADP + H(+). The enzyme catalyses L-threonyl-[protein] + ATP = O-phospho-L-threonyl-[protein] + ADP + H(+). The sequence is that of Probable serine/threonine-protein kinase DDB_G0270146 from Dictyostelium discoideum (Social amoeba).